The following is a 313-amino-acid chain: Ribose-phosphate pyrophosphokinase (313 aa).

Residues 37 to 39 (DGE) and 96 to 97 (RQ) each bind ATP. Mg(2+)-binding residues include histidine 131 and aspartate 170. Lysine 193 is a catalytic residue. D-ribose 5-phosphate contacts are provided by residues arginine 195, aspartate 219, and 223 to 227 (DTAGT).

The protein belongs to the ribose-phosphate pyrophosphokinase family. Class I subfamily. As to quaternary structure, homohexamer. It depends on Mg(2+) as a cofactor.

It localises to the cytoplasm. It catalyses the reaction D-ribose 5-phosphate + ATP = 5-phospho-alpha-D-ribose 1-diphosphate + AMP + H(+). It functions in the pathway metabolic intermediate biosynthesis; 5-phospho-alpha-D-ribose 1-diphosphate biosynthesis; 5-phospho-alpha-D-ribose 1-diphosphate from D-ribose 5-phosphate (route I): step 1/1. In terms of biological role, involved in the biosynthesis of the central metabolite phospho-alpha-D-ribosyl-1-pyrophosphate (PRPP) via the transfer of pyrophosphoryl group from ATP to 1-hydroxyl of ribose-5-phosphate (Rib-5-P). This Pseudomonas putida (strain ATCC 47054 / DSM 6125 / CFBP 8728 / NCIMB 11950 / KT2440) protein is Ribose-phosphate pyrophosphokinase.